The sequence spans 242 residues: Small ribosomal subunit protein uS3 (242 aa).

Residues Ile-39–Glu-110 enclose the KH type-2 domain. A disordered region spans residues Gln-216 to Gly-242. The segment covering Gln-233–Gly-242 has biased composition (basic and acidic residues).

Belongs to the universal ribosomal protein uS3 family. In terms of assembly, part of the 30S ribosomal subunit. Forms a tight complex with proteins S10 and S14.

Its function is as follows. Binds the lower part of the 30S subunit head. Binds mRNA in the 70S ribosome, positioning it for translation. The protein is Small ribosomal subunit protein uS3 of Synechococcus sp. (strain CC9902).